The following is a 645-amino-acid chain: Acetyl-coenzyme A synthetase (645 aa).

Residues 190 to 193 (RGGR) and threonine 309 each bind CoA. ATP contacts are provided by residues 385–387 (GEP), 409–414 (DTWWQT), aspartate 498, and arginine 513. Serine 521 is a CoA binding site. Residue arginine 524 participates in ATP binding. Positions 535, 537, and 540 each coordinate Mg(2+). Arginine 582 provides a ligand contact to CoA. N6-acetyllysine is present on lysine 607.

This sequence belongs to the ATP-dependent AMP-binding enzyme family. The cofactor is Mg(2+). Post-translationally, acetylated. Deacetylation by the SIR2-homolog deacetylase activates the enzyme.

The catalysed reaction is acetate + ATP + CoA = acetyl-CoA + AMP + diphosphate. Functionally, catalyzes the conversion of acetate into acetyl-CoA (AcCoA), an essential intermediate at the junction of anabolic and catabolic pathways. AcsA undergoes a two-step reaction. In the first half reaction, AcsA combines acetate with ATP to form acetyl-adenylate (AcAMP) intermediate. In the second half reaction, it can then transfer the acetyl group from AcAMP to the sulfhydryl group of CoA, forming the product AcCoA. In Methylocella silvestris (strain DSM 15510 / CIP 108128 / LMG 27833 / NCIMB 13906 / BL2), this protein is Acetyl-coenzyme A synthetase.